The following is a 427-amino-acid chain: Trigger factor (427 aa).

The region spanning 160–240 is the PPIase FKBP-type domain; sequence GDTLIGDVTK…VKEVKRLELP (81 aa).

This sequence belongs to the FKBP-type PPIase family. Tig subfamily.

It localises to the cytoplasm. It catalyses the reaction [protein]-peptidylproline (omega=180) = [protein]-peptidylproline (omega=0). Functionally, involved in protein export. Acts as a chaperone by maintaining the newly synthesized protein in an open conformation. Functions as a peptidyl-prolyl cis-trans isomerase. This chain is Trigger factor, found in Chlorobaculum parvum (strain DSM 263 / NCIMB 8327) (Chlorobium vibrioforme subsp. thiosulfatophilum).